The chain runs to 404 residues: MKLPIYLDYAATTPVDPRVAEKMFQYMTMDGIFGNPASRSHRYGWQAEEAVDVARNQVADLINADHREIVFTSGATESNNLAIKGVAHFYKKKGKHIITSKTEHKAVLDTCRQLEREGFEVTYLEPESNGIIPMARLEAAMRDDTILVSIMHVNNEIGVIHDIDAIGELCRSKGIIFHMDAAQSAGKLPIDVQATKVDLISISGHKMYGPKGIGALYVRRKPRIRLEAQMHGGGHERGMRSGTLPTHQIVGLGEASAIAKAEMATDNVRIAKLRDKLWNGIKHIEETYVNGDMNQRTSGSLNVSFNYVEGESLMMALKDLAVSSGSACTSASLEPSYVLRALGLNDEMAHSSIRFSIGRFTTEEEIDHAIEVITQSIDKLREMSPLWEMFKDGIDLNQVQWAHH.

Pyridoxal 5'-phosphate is bound by residues 75–76 (AT), asparagine 155, glutamine 183, and 203–205 (SGH). Position 206 is an N6-(pyridoxal phosphate)lysine (lysine 206). Threonine 243 serves as a coordination point for pyridoxal 5'-phosphate. Cysteine 328 acts as the Cysteine persulfide intermediate in catalysis. Cysteine 328 is a binding site for [2Fe-2S] cluster.

This sequence belongs to the class-V pyridoxal-phosphate-dependent aminotransferase family. NifS/IscS subfamily. Homodimer. Forms a heterotetramer with IscU, interacts with other sulfur acceptors. Requires pyridoxal 5'-phosphate as cofactor.

The protein localises to the cytoplasm. The enzyme catalyses (sulfur carrier)-H + L-cysteine = (sulfur carrier)-SH + L-alanine. The protein operates within cofactor biosynthesis; iron-sulfur cluster biosynthesis. Functionally, master enzyme that delivers sulfur to a number of partners involved in Fe-S cluster assembly, tRNA modification or cofactor biosynthesis. Catalyzes the removal of elemental sulfur atoms from cysteine to produce alanine. Functions as a sulfur delivery protein for Fe-S cluster synthesis onto IscU, an Fe-S scaffold assembly protein, as well as other S acceptor proteins. The chain is Cysteine desulfurase IscS from Shewanella oneidensis (strain ATCC 700550 / JCM 31522 / CIP 106686 / LMG 19005 / NCIMB 14063 / MR-1).